Reading from the N-terminus, the 3323-residue chain is Mucin-3A (3323 aa).

A signal peptide spans 1-15 (MQLLGLLGLLWMLKA). 15 disordered regions span residues 218–243 (TISSTTRTTERTPLPTGSIHTTTSPT), 270–289 (TSMTTTASQPTATNTLSSPT), 325–345 (ISRSTPTSETTYTTSPTSTVT), 359–380 (GTLSTETSLPPTSSSLPTTETA), 539–677 (MSAS…PSTE), 700–722 (NASSMTTSETTYPNSPTGPGTNS), 734–756 (ETSSTATSLPPTSPLVSTAKTAK), 909–991 (SFSS…TLTP), 1170–1201 (ISSASPTSGTMVTSTTMTPSSLSTDTPSTTPT), 1318–1356 (AESALAPTTTTSFTTSPTMEPPSTTVATTGTGQTTFPSS), 1380–1442 (AMTS…TNPV), 1484–1509 (TMTETSSTATSLPPTSSLVSTAETAK), 1714–1746 (TPSSTVATTGTGQTTFTSSTATSPKTTTLTPTS), 1793–1844 (FTSS…YPTS), and 1900–2056 (TSHS…SHST). Residues 270-284 (TSMTTTASQPTATNT) show a composition bias toward low complexity. Polar residues predominate over residues 545 to 563 (GTTHTESISSPPASTSTLH). The segment covering 564-618 (TTAESTLAPTTTTSFTTSTTMEPPSTTAATTGTGQTTFTSSTATFPETTTPTPTT) has biased composition (low complexity). Over residues 619-629 (DMSTESLTTAM) the composition is skewed to polar residues. Low complexity predominate over residues 630–676 (TSPPITSSVTSTNTVTSMTTTTSPPTTTNSFTSLTSMPLSSTPVPST). Positions 700–721 (NASSMTTSETTYPNSPTGPGTN) are enriched in polar residues. The segment covering 909–918 (SFSSSMSESS) has biased composition (low complexity). Residues 919 to 932 (AGTTHTESISSPRG) are compositionally biased toward polar residues. Positions 933 to 991 (TTSTLHTTVESTPSPTTTTSFTTSTMMEPPSSTVSTTGRGQTTFPSSTATFPETTTLTP) are enriched in low complexity. A compositionally biased stretch (low complexity) spans 1324–1356 (PTTTTSFTTSPTMEPPSTTVATTGTGQTTFPSS). 32 tandem repeats follow at residues 1893–1910 (VTTTTKITSHSTPSFTSS), 1911–1927 (IATTETPSHSTPRFTSS), 1928–1944 (ITTTETPSHSTPRFTSS), 1945–1961 (ITNTKTTSHSSPSFTSS), 1962–1978 (ITTTETTSHNTPSLTSS), 1979–1995 (ITTTKTTSHSTPSYTSL), 1996–2012 (ITTTTTTSHSTPSFTSS), 2013–2029 (ITTTETTSHNTPSLTSS), 2030–2046 (ITTTETTSHSTPSFTSS), 2047–2062 (ITTETTSHSTPSFTSL), 2063–2079 (ITITEITSHSTLSYTTS), 2080–2096 (ITTTETPSHSTLSFTSS), 2097–2113 (ITTTETTSHSTPSFTSS), 2114–2130 (ITTSEMPSHSTPSFTSS), 2131–2147 (ITTTENATHSTPNFTSS), 2148–2164 (ITTTETTSHSTPSFTSL), 2165–2191 (ITTTETTSHRWGTTETTSYSTPSFTSS), 2192–2208 (NTITETTSHSTPSYITS), 2209–2225 (ITTTETPSSSTPSFSSS), 2226–2242 (ITTTETTSHSTPGFTSS), 2243–2259 (ITTTETTSHSTPSFTSS), 2260–2276 (ITTTETTSHDTPSFTSS), 2277–2293 (ITTSETPSHSTPSSTSL), 2294–2310 (ITTTKTTSHSTPSFTSS), 2311–2327 (ITTTETTSHSAHSFTSS), 2328–2344 (ITTTETTSHNTRSFTSS), 2345–2361 (ITTTETNSHSTTSFTSS), 2362–2378 (ITTTETTSHSTPSFSSS), 2379–2395 (ITTTETPLHSTPGLTSW), 2396–2412 (VTTTKTTSHITPGLTSS), 2413–2429 (ITTTETTSHSTPGFTSS), and 2430–2446 (ITTTETTSESTPSLSSS). The segment at 1893–2446 (VTTTTKITSH…SESTPSLSSS (554 aa)) is 32 X approximate tandem repeats, Ser/Thr-rich. Polar residues predominate over residues 1907 to 1947 (FTSSIATTETPSHSTPRFTSSITTTETPSHSTPRFTSSITN). Positions 1948-2056 (TKTTSHSSPS…ITTETTSHST (109 aa)) are enriched in low complexity. Composition is skewed to low complexity over residues 2100 to 2170 (TETT…TTET), 2177 to 2384 (TTET…TTET), 2393 to 2447 (TSWV…SSST), and 2464 to 2507 (TTSE…TTTT). Disordered regions lie at residues 2100-2447 (TETT…SSST), 2464-2508 (TTSE…TTTD), 2578-2608 (TQTPPVLTSATGTQTSPAPTTVTFGSTDSST), 2631-2656 (IPSTHSSTLQTTPSTPSLQTSLTSTS), 2834-2858 (MMPESESSISPNASSSTGTGTVPTN), and 2897-2937 (SSLP…TSRR). Over residues 2578-2602 (TQTPPVLTSATGTQTSPAPTTVTFG) the composition is skewed to polar residues. Low complexity-rich tracts occupy residues 2633-2656 (STHSSTLQTTPSTPSLQTSLTSTS), 2834-2849 (MMPESESSISPNASSS), and 2905-2937 (TSSKSTHPSPPTTRTSETPVATTQTPTTLTSRR). Residues 2976–3009 (SGDRCQLQTRCQNGGQWDGLKCQCPSTFYGSSCE) enclose the EGF-like domain. Disulfide bonds link cysteine 2980–cysteine 2986 and cysteine 2999–cysteine 3008. One can recognise an SEA domain in the interval 3018-3143 (DVVETEVGME…DSIKVNNNSK (126 aa)). A helical membrane pass occupies residues 3227–3247 (LVGGLTAGAALLVLLLLALGV).

Highly O-glycosylated and probably also N-glycosylated. Broad specificity; small intestine, colon, colonic tumors, heart, liver, thymus, prostate, pancreas and gall bladder.

Its subcellular location is the membrane. It localises to the secreted. Its function is as follows. Major glycoprotein component of a variety of mucus gels. Thought to provide a protective, lubricating barrier against particles and infectious agents at mucosal surfaces. May be involved in ligand binding and intracellular signaling. This chain is Mucin-3A, found in Homo sapiens (Human).